An 867-amino-acid chain; its full sequence is Translation initiation factor IF-2 (867 aa).

In terms of domain architecture, tr-type G spans 367–534 (TRAPVVTIMG…AILLQSEILE (168 aa)). Residues 376–383 (GHVDHGKT) are G1. 376-383 (GHVDHGKT) is a binding site for GTP. The interval 401 to 405 (GITQN) is G2. Residues 422–425 (DTPG) form a G3 region. GTP-binding positions include 422–426 (DTPGH) and 476–479 (NKID). The tract at residues 476-479 (NKID) is G4. The segment at 512-514 (SAK) is G5.

It belongs to the TRAFAC class translation factor GTPase superfamily. Classic translation factor GTPase family. IF-2 subfamily.

The protein localises to the cytoplasm. Its function is as follows. One of the essential components for the initiation of protein synthesis. Protects formylmethionyl-tRNA from spontaneous hydrolysis and promotes its binding to the 30S ribosomal subunits. Also involved in the hydrolysis of GTP during the formation of the 70S ribosomal complex. The polypeptide is Translation initiation factor IF-2 (Buchnera aphidicola subsp. Schizaphis graminum (strain Sg)).